Here is a 434-residue protein sequence, read N- to C-terminus: Mitochondrial distribution and morphology protein 12 (434 aa).

Residues Met-1–Val-434 enclose the SMP-LTD domain. The segment covering Tyr-70–Glu-83 has biased composition (acidic residues). 2 disordered regions span residues Tyr-70–Pro-141 and Thr-181–Arg-277. Residues Ser-86–Ser-97 show a composition bias toward basic and acidic residues. Residues Ser-215–Ser-237 are compositionally biased toward polar residues.

It belongs to the MDM12 family. As to quaternary structure, component of the ER-mitochondria encounter structure (ERMES) or MDM complex, composed of MMM1, MDM10, MDM12 and MDM34. An MMM1 homodimer associates with one molecule of MDM12 on each side in a pairwise head-to-tail manner, and the SMP-LTD domains of MMM1 and MDM12 generate a continuous hydrophobic tunnel for phospholipid trafficking.

Its subcellular location is the mitochondrion outer membrane. It is found in the endoplasmic reticulum membrane. In terms of biological role, component of the ERMES/MDM complex, which serves as a molecular tether to connect the endoplasmic reticulum (ER) and mitochondria. Components of this complex are involved in the control of mitochondrial shape and protein biogenesis, and function in nonvesicular lipid trafficking between the ER and mitochondria. MDM12 is required for the interaction of the ER-resident membrane protein MMM1 and the outer mitochondrial membrane-resident beta-barrel protein MDM10. The MDM12-MMM1 subcomplex functions in the major beta-barrel assembly pathway that is responsible for biogenesis of all mitochondrial outer membrane beta-barrel proteins, and acts in a late step after the SAM complex. The MDM10-MDM12-MMM1 subcomplex further acts in the TOM40-specific pathway after the action of the MDM12-MMM1 complex. Essential for establishing and maintaining the structure of mitochondria and maintenance of mtDNA nucleoids. The protein is Mitochondrial distribution and morphology protein 12 of Ajellomyces dermatitidis (strain ER-3 / ATCC MYA-2586) (Blastomyces dermatitidis).